The primary structure comprises 277 residues: Outer plastidial membrane protein porin (277 aa).

Belongs to the eukaryotic mitochondrial porin (TC 1.B.8.1) family.

The protein localises to the plastid outer membrane. Its function is as follows. Forms a channel through the cell membrane that allows diffusion of small hydrophilic molecules. The channel adopts an open conformation at low or zero membrane potential and a closed conformation at potentials above 30-40 mV. The open state has a weak anion selectivity whereas the closed state is cation-selective. This is Outer plastidial membrane protein porin (POR1) from Zea mays (Maize).